Reading from the N-terminus, the 317-residue chain is Beta-ketoacyl-[acyl-carrier-protein] synthase III (317 aa).

Residues C112 and H244 contribute to the active site. The tract at residues 245–249 (QANLR) is ACP-binding. N274 is an active-site residue.

This sequence belongs to the thiolase-like superfamily. FabH family. As to quaternary structure, homodimer.

The protein localises to the cytoplasm. It carries out the reaction malonyl-[ACP] + acetyl-CoA + H(+) = 3-oxobutanoyl-[ACP] + CO2 + CoA. The protein operates within lipid metabolism; fatty acid biosynthesis. Catalyzes the condensation reaction of fatty acid synthesis by the addition to an acyl acceptor of two carbons from malonyl-ACP. Catalyzes the first condensation reaction which initiates fatty acid synthesis and may therefore play a role in governing the total rate of fatty acid production. Possesses both acetoacetyl-ACP synthase and acetyl transacylase activities. Its substrate specificity determines the biosynthesis of branched-chain and/or straight-chain of fatty acids. This Blochmanniella pennsylvanica (strain BPEN) protein is Beta-ketoacyl-[acyl-carrier-protein] synthase III.